Here is a 494-residue protein sequence, read N- to C-terminus: Bifunctional pantoate ligase/cytidylate kinase (494 aa).

A pantoate--beta-alanine ligase region spans residues 1-258 (MHFVPTMGGL…CGSTRLIDHA (258 aa)). 7-14 (MGGLHHGH) is a binding site for ATP. His-14 functions as the Proton donor in the catalytic mechanism. A (R)-pantoate-binding site is contributed by Gln-41. A beta-alanine-binding site is contributed by Gln-41. 130–133 (GEKD) lines the ATP pocket. Gln-136 is a (R)-pantoate binding site. ATP is bound by residues Val-159 and 167–170 (SSSR). Residues 259-494 (FLMTRSPLVA…VGEEVWPTPV (236 aa)) are cytidylate kinase.

The protein in the N-terminal section; belongs to the pantothenate synthetase family. It in the C-terminal section; belongs to the cytidylate kinase family. Type 1 subfamily.

The protein resides in the cytoplasm. It catalyses the reaction (R)-pantoate + beta-alanine + ATP = (R)-pantothenate + AMP + diphosphate + H(+). It carries out the reaction CMP + ATP = CDP + ADP. The enzyme catalyses dCMP + ATP = dCDP + ADP. The protein operates within cofactor biosynthesis; (R)-pantothenate biosynthesis; (R)-pantothenate from (R)-pantoate and beta-alanine: step 1/1. Catalyzes the condensation of pantoate with beta-alanine in an ATP-dependent reaction via a pantoyl-adenylate intermediate. Its function is as follows. Catalyzes the transfer of a phosphate group from ATP to either CMP or dCMP to form CDP or dCDP and ADP, respectively. The sequence is that of Bifunctional pantoate ligase/cytidylate kinase from Synechococcus sp. (strain CC9311).